The following is a 624-amino-acid chain: Fibronectin type III domain-containing protein 2 (624 aa).

A signal peptide spans Met-1–Gly-19. 5 Fibronectin type-III domains span residues Pro-131 to Ile-236, Glu-240 to Phe-330, Met-334 to Thr-430, Val-431 to Asp-524, and Val-527 to Arg-624.

As to expression, prismatic layer of shell (at protein level).

The protein localises to the secreted. The sequence is that of Fibronectin type III domain-containing protein 2 from Margaritifera margaritifera (Freshwater pearl mussel).